The sequence spans 376 residues: WD repeat-containing protein wdr-5.1 (376 aa).

Over residues 1–24 the composition is skewed to polar residues; it reads MDTSENAASAAEQQPTQQIDQLTV. Residues 1 to 70 are disordered; the sequence is MDTSENAASA…TPNPNAAGAS (70 aa). The segment covering 25–53 has biased composition (low complexity); that stretch reads PNAPDGGSSAPAPSTSPNSISPSNPTGTP. WD repeat units lie at residues 85 to 115, 127 to 157, 169 to 199, 211 to 241, 254 to 284, 296 to 329, and 341 to 373; these read GHTKSISSAKFSPCGKYLGTSSADKTVKIWN, GHKLGVNDIAWSSDSRCVVSASDDKTLKIFE, GHNNYVFCCNFNPQSSLVVSGSFDESVRIWD, AHSDPVSAVSFNRDGSLIASGSYDGLVRIWD, DENPPVAFVKFSPNGKYILASNLDSTLKLWD, GHENSKYCIFANFSVTGGKWIISGSEDCKIYIWN, and GHTQPVLASDCHPVQNIIASGALEPDNKIHIWR.

The protein belongs to the WD repeat WDR5/wds family. In terms of assembly, component of the SET2 complex (also known as the SET1/COMPASS complex), which contains at least set-2, swd-2.1, cfp-1, rbbp-5, wdr-5.1, dpy-30 and ash-2. Within the complex, interacts with cfp-1, ash-2, dpy-30 and hda-1. Interacts with histone H3 both unmethylated and methylated at 'Lys-4'. Interacts with jmjd-3.1, ceh-6, sox-2, sem-4 and egl-27. Interacts with set-2. As to expression, enriched in the germline. Detected in all nuclei of the embryo. In larvae, expression is detected in the nuclei of seam cells, somatic gonad precursor cells Z1 and Z4, vulval precursor cells, distal tip cells, hypodermal cells, intestinal and muscle cells. Also detected in the neurons from the ventral nerve cord, head and tail region. Expressed in the head and tail region, intestinal cells, muscle cells, cells of the vulva, spermatheca and sheath cells in adults.

It is found in the nucleus. Contributes to histone modification. May position the N-terminus of histone H3 for efficient trimethylation at 'Lys-4'. Required for di- and trimethylation, particularly for the trimethylation at 'Lys-4' of histone H3. Not required for demethylation of histone H3 'Lys-27'. H3 'Lys-4' methylation represents a specific tag for epigenetic transcriptional activation, germline establishment, maintenance and function. Implicated in the epigenetic inheritance of lifespan over several generations. Acts in the germline to limit the longevity of the soma, probably by regulating a lipid metabolism pathway that signals from the germline to the intestine, thereby preventing accumulation of mono-unsaturated fatty acids. Required for RNA interference with probable antagonistic role against hpl-2 function. Plays a role in vulval cell fate specification by acting in the synthetic multivulva pathway independent of set-2. Sex determining protein required in the germline to promote the spermatogenesis to oogenesis switch during the late larval stages of development. Acts with the sex determining factor tra-1, and redundantly with wdr-5.2, to regulate fog-3 expression, which in turn determines germ cell fate. Cooperates with jmjd-3.1, egl-27 and unc-3 to ensure robust transdifferentiation of the Y rectal cell to the PDA motor neuron during larval development. This chain is WD repeat-containing protein wdr-5.1 (wdr-5.1), found in Caenorhabditis elegans.